Reading from the N-terminus, the 157-residue chain is Phosphopantetheine adenylyltransferase (157 aa).

S8 contributes to the substrate binding site. Residues S8 to F9 and H16 contribute to the ATP site. Residues K40, T72, and R86 each contribute to the substrate site. ATP is bound by residues G87–R89, E97, and Y122–S128.

It belongs to the bacterial CoaD family. In terms of assembly, homohexamer. Requires Mg(2+) as cofactor.

The protein resides in the cytoplasm. It catalyses the reaction (R)-4'-phosphopantetheine + ATP + H(+) = 3'-dephospho-CoA + diphosphate. Its pathway is cofactor biosynthesis; coenzyme A biosynthesis; CoA from (R)-pantothenate: step 4/5. Its function is as follows. Reversibly transfers an adenylyl group from ATP to 4'-phosphopantetheine, yielding dephospho-CoA (dPCoA) and pyrophosphate. This is Phosphopantetheine adenylyltransferase from Crocosphaera subtropica (strain ATCC 51142 / BH68) (Cyanothece sp. (strain ATCC 51142)).